We begin with the raw amino-acid sequence, 109 residues long: U26-theraphotoxin-Cg1b (109 aa).

Positions 1–18 are cleaved as a signal peptide; it reads MNTIIPLLLLSLLITVYA. The propeptide occupies 19–67; it reads YALEDGNKEEMQDIAESEFEASNEMLQLAHLLEADRAETEEDRNSRQKR. 3 cysteine pairs are disulfide-bonded: cysteine 68-cysteine 83, cysteine 75-cysteine 88, and cysteine 82-cysteine 103.

It belongs to the neurotoxin 14 (magi-1) family. 07 (Jztx-56) subfamily. As to expression, expressed by the venom gland.

The protein resides in the secreted. Functionally, probable ion channel inhibitor. This is U26-theraphotoxin-Cg1b from Chilobrachys guangxiensis (Chinese earth tiger tarantula).